Reading from the N-terminus, the 366-residue chain is tRNA-specific 2-thiouridylase MnmA (366 aa).

ATP contacts are provided by residues 6-13 (AMSGGVDS) and L32. C101 acts as the Nucleophile in catalysis. An intrachain disulfide couples C101 to C198. G125 serves as a coordination point for ATP. The tract at residues 148–150 (KDQ) is interaction with tRNA. C198 (cysteine persulfide intermediate) is an active-site residue.

Belongs to the MnmA/TRMU family.

The protein localises to the cytoplasm. It carries out the reaction S-sulfanyl-L-cysteinyl-[protein] + uridine(34) in tRNA + AH2 + ATP = 2-thiouridine(34) in tRNA + L-cysteinyl-[protein] + A + AMP + diphosphate + H(+). Catalyzes the 2-thiolation of uridine at the wobble position (U34) of tRNA, leading to the formation of s(2)U34. The sequence is that of tRNA-specific 2-thiouridylase MnmA from Nocardioides sp. (strain ATCC BAA-499 / JS614).